The following is a 350-amino-acid chain: Holliday junction branch migration complex subunit RuvB (350 aa).

The tract at residues 1–22 is disordered; the sequence is MDHTASLSPVRPEAQPTDDRER. The interval 1–185 is large ATPase domain (RuvB-L); that stretch reads MDHTASLSPV…FGIVERFEFY (185 aa). ATP-binding positions include Leu-24, Arg-25, Gly-66, Lys-69, Thr-70, Thr-71, 132 to 134, Arg-175, Tyr-185, and Arg-222; that span reads EDY. Thr-70 contacts Mg(2+). Positions 186–256 are small ATPAse domain (RuvB-S); it reads TPEELAAIVQ…IVRAGLAHLK (71 aa). The interval 259 to 350 is head domain (RuvB-H); that stretch reads ELGLELHDIQ…PHSPEQGTLL (92 aa). Residues Arg-314 and Arg-319 each coordinate DNA.

This sequence belongs to the RuvB family. In terms of assembly, homohexamer. Forms an RuvA(8)-RuvB(12)-Holliday junction (HJ) complex. HJ DNA is sandwiched between 2 RuvA tetramers; dsDNA enters through RuvA and exits via RuvB. An RuvB hexamer assembles on each DNA strand where it exits the tetramer. Each RuvB hexamer is contacted by two RuvA subunits (via domain III) on 2 adjacent RuvB subunits; this complex drives branch migration. In the full resolvosome a probable DNA-RuvA(4)-RuvB(12)-RuvC(2) complex forms which resolves the HJ.

The protein resides in the cytoplasm. It carries out the reaction ATP + H2O = ADP + phosphate + H(+). Its function is as follows. The RuvA-RuvB-RuvC complex processes Holliday junction (HJ) DNA during genetic recombination and DNA repair, while the RuvA-RuvB complex plays an important role in the rescue of blocked DNA replication forks via replication fork reversal (RFR). RuvA specifically binds to HJ cruciform DNA, conferring on it an open structure. The RuvB hexamer acts as an ATP-dependent pump, pulling dsDNA into and through the RuvAB complex. RuvB forms 2 homohexamers on either side of HJ DNA bound by 1 or 2 RuvA tetramers; 4 subunits per hexamer contact DNA at a time. Coordinated motions by a converter formed by DNA-disengaged RuvB subunits stimulates ATP hydrolysis and nucleotide exchange. Immobilization of the converter enables RuvB to convert the ATP-contained energy into a lever motion, pulling 2 nucleotides of DNA out of the RuvA tetramer per ATP hydrolyzed, thus driving DNA branch migration. The RuvB motors rotate together with the DNA substrate, which together with the progressing nucleotide cycle form the mechanistic basis for DNA recombination by continuous HJ branch migration. Branch migration allows RuvC to scan DNA until it finds its consensus sequence, where it cleaves and resolves cruciform DNA. The chain is Holliday junction branch migration complex subunit RuvB from Treponema pallidum (strain Nichols).